Here is a 106-residue protein sequence, read N- to C-terminus: Large ribosomal subunit protein eL42 (106 aa).

The segment at 34–53 is disordered; that stretch reads YAQGKRRYDRKQSGYGGQTK.

The protein belongs to the eukaryotic ribosomal protein eL42 family. In terms of assembly, component of the large ribosomal subunit.

The protein localises to the cytoplasm. Component of the large ribosomal subunit. The ribosome is a large ribonucleoprotein complex responsible for the synthesis of proteins in the cell. The chain is Large ribosomal subunit protein eL42 (Rpl36a) from Canis lupus familiaris (Dog).